The primary structure comprises 529 residues: Polygalacturonase (529 aa).

Positions 1-21 are cleaved as a signal peptide; it reads MNHRYTLLALAAAALSAGAHA. The active-site Proton donor is Asp305. His331 is an active-site residue. The interval 516–529 is required for PGA export across the outer membrane and catalytic activity; it reads AFVPLKSVAPTSPI.

This sequence belongs to the glycosyl hydrolase 28 family. Monomer.

The protein resides in the secreted. It carries out the reaction (1,4-alpha-D-galacturonosyl)n+m + H2O = (1,4-alpha-D-galacturonosyl)n + (1,4-alpha-D-galacturonosyl)m.. Its function is as follows. Contributes to the wilt disease production on tomato. The polypeptide is Polygalacturonase (pglA) (Ralstonia solanacearum (Pseudomonas solanacearum)).